Consider the following 181-residue polypeptide: Oligoribonuclease (181 aa).

The 164-residue stretch at 8-171 folds into the Exonuclease domain; sequence LIWIDMEMTG…ADIYDSIEEL (164 aa). The active site involves Tyr129.

This sequence belongs to the oligoribonuclease family.

It is found in the cytoplasm. Its function is as follows. 3'-to-5' exoribonuclease specific for small oligoribonucleotides. In Nitrosomonas eutropha (strain DSM 101675 / C91 / Nm57), this protein is Oligoribonuclease.